We begin with the raw amino-acid sequence, 264 residues long: Tryptophan synthase alpha chain (264 aa).

Catalysis depends on proton acceptor residues Glu-45 and Asp-56.

Belongs to the TrpA family. Tetramer of two alpha and two beta chains.

It carries out the reaction (1S,2R)-1-C-(indol-3-yl)glycerol 3-phosphate + L-serine = D-glyceraldehyde 3-phosphate + L-tryptophan + H2O. It participates in amino-acid biosynthesis; L-tryptophan biosynthesis; L-tryptophan from chorismate: step 5/5. Its function is as follows. The alpha subunit is responsible for the aldol cleavage of indoleglycerol phosphate to indole and glyceraldehyde 3-phosphate. The chain is Tryptophan synthase alpha chain from Leptospira interrogans serogroup Icterohaemorrhagiae serovar copenhageni (strain Fiocruz L1-130).